The following is a 189-amino-acid chain: Large ribosomal subunit protein uL5c (189 aa).

It belongs to the universal ribosomal protein uL5 family. In terms of assembly, part of the 50S ribosomal subunit; contacts the 5S rRNA.

It localises to the plastid. It is found in the chloroplast. In terms of biological role, binds 5S rRNA, forms part of the central protuberance of the 50S subunit. This chain is Large ribosomal subunit protein uL5c (rpl5), found in Chara vulgaris (Common stonewort).